The chain runs to 513 residues: Maturase K (513 aa).

This sequence belongs to the intron maturase 2 family. MatK subfamily.

It localises to the plastid. It is found in the chloroplast. Usually encoded in the trnK tRNA gene intron. Probably assists in splicing its own and other chloroplast group II introns. In Sporobolus michauxianus (Prairie cordgrass), this protein is Maturase K.